The primary structure comprises 322 residues: Transaldolase (322 aa).

The active-site Schiff-base intermediate with substrate is the Lys-132.

Belongs to the transaldolase family. Type 1 subfamily. Homodimer.

The protein localises to the cytoplasm. It carries out the reaction D-sedoheptulose 7-phosphate + D-glyceraldehyde 3-phosphate = D-erythrose 4-phosphate + beta-D-fructose 6-phosphate. It participates in carbohydrate degradation; pentose phosphate pathway; D-glyceraldehyde 3-phosphate and beta-D-fructose 6-phosphate from D-ribose 5-phosphate and D-xylulose 5-phosphate (non-oxidative stage): step 2/3. Its function is as follows. Transaldolase is important for the balance of metabolites in the pentose-phosphate pathway. In Protochlamydia amoebophila (strain UWE25), this protein is Transaldolase.